Here is an 855-residue protein sequence, read N- to C-terminus: Potassium transporter 13 (855 aa).

Residues 1 to 67 are disordered; sequence MFHVEEESSG…EMDSDEEDDN (67 aa). Residues 1 to 105 lie on the Cytoplasmic side of the membrane; sequence MFHVEEESSG…EIEDTGIGKK (105 aa). Residues 36–51 are compositionally biased toward acidic residues; it reads EKDDYEVNEDYDDDGY. Residues 106–126 form a helical membrane-spanning segment; the sequence is LILALQTLGVVFGDIGTSPLY. Topologically, residues 127-142 are extracellular; it reads TFTVMFRRSPINDKED. Residues 143–163 traverse the membrane as a helical segment; sequence IIGALSLVIYTLILIPLVKYV. Residues 164-233 are Cytoplasmic-facing; the sequence is HFVLWANDDG…RLEASMALKK (70 aa). The helical transmembrane segment at 234–254 threads the bilayer; it reads LLLILVLAGTAMVIADAVVTP. The Extracellular portion of the chain corresponds to 255–268; sequence AMSVMSAIGGLKVG. The chain crosses the membrane as a helical span at residues 269 to 289; the sequence is VGVIEQDQVVVISVSFLVILF. At 290–298 the chain is on the cytoplasmic side; it reads SVQKYGTSK. A helical membrane pass occupies residues 299–319; it reads LGLVLGPALLLWFFCLAGIGI. Over 320 to 346 the chain is Extracellular; that stretch reads YNLVKYDSSVFKAFNPAYIYFFFKRNS. Residues 347–367 form a helical membrane-spanning segment; that stretch reads VNAWYALGGCVLCATGSEAMF. At 368–379 the chain is on the cytoplasmic side; that stretch reads ADLSYFSVHSIQ. The chain crosses the membrane as a helical span at residues 380-400; sequence LTFILLVLPCLLLGYLGQAAY. Topologically, residues 401–415 are extracellular; the sequence is LSENFSAAGDAFFSS. Asn404 carries N-linked (GlcNAc...) asparagine glycosylation. Residues 416 to 436 form a helical membrane-spanning segment; the sequence is VPSSLFWPVFLISNVAALIAS. Topologically, residues 437 to 467 are cytoplasmic; sequence RAMTTATFTCIKQSIALGCFPRLKIIHTSKK. A helical transmembrane segment spans residues 468–488; it reads FIGQIYIPVLNWSLLVVCLIV. At 489–503 the chain is on the extracellular side; the sequence is VCSTSNIFAIGNAYG. The helical transmembrane segment at 504–524 threads the bilayer; it reads IAELGIMMTTTILVTLIMLLI. Residues 525–528 are Cytoplasmic-facing; it reads WQTN. A helical transmembrane segment spans residues 529 to 549; sequence IIVVSMFAIVSLIVELVFFSS. Residues 550-553 lie on the Extracellular side of the membrane; that stretch reads VCSS. Residues 554 to 574 traverse the membrane as a helical segment; sequence VADGSWIILVFATIMFLIMFV. At 575–855 the chain is on the cytoplasmic side; it reads WNYGSKLKYE…LMQVGMTYMV (281 aa). Ser766 carries the phosphoserine modification.

It belongs to the HAK/KUP transporter (TC 2.A.72.3) family.

It localises to the cell membrane. Its function is as follows. Probable potassium transporter. The polypeptide is Potassium transporter 13 (POT13) (Arabidopsis thaliana (Mouse-ear cress)).